Reading from the N-terminus, the 141-residue chain is Ribonuclease VapC38 (141 aa).

2 residues coordinate Mg(2+): Asp-5 and Asp-102.

Belongs to the PINc/VapC protein family. Requires Mg(2+) as cofactor.

It localises to the secreted. Toxic component of a type II toxin-antitoxin (TA) system. An RNase. Its cognate antitoxin is VapB38. This chain is Ribonuclease VapC38, found in Mycobacterium tuberculosis (strain ATCC 25618 / H37Rv).